The following is a 355-amino-acid chain: 3-dehydroquinate synthase (355 aa).

Residues 105-109, 129-130, lysine 142, lysine 151, and 169-172 each bind NAD(+); these read GVVGD, TS, and TLKT. Positions 184, 246, and 263 each coordinate Zn(2+).

The protein belongs to the sugar phosphate cyclases superfamily. Dehydroquinate synthase family. It depends on Co(2+) as a cofactor. Zn(2+) is required as a cofactor. NAD(+) serves as cofactor.

The protein resides in the cytoplasm. It carries out the reaction 7-phospho-2-dehydro-3-deoxy-D-arabino-heptonate = 3-dehydroquinate + phosphate. Its pathway is metabolic intermediate biosynthesis; chorismate biosynthesis; chorismate from D-erythrose 4-phosphate and phosphoenolpyruvate: step 2/7. Functionally, catalyzes the conversion of 3-deoxy-D-arabino-heptulosonate 7-phosphate (DAHP) to dehydroquinate (DHQ). In Streptococcus agalactiae serotype Ia (strain ATCC 27591 / A909 / CDC SS700), this protein is 3-dehydroquinate synthase.